The following is a 249-amino-acid chain: Pyridoxamine 5'-phosphate oxidase family protein ustO (249 aa).

21–24 is a binding site for substrate; the sequence is LFFV. Residues 76–81, 91–92, Arg105, and 163–164 contribute to the FMN site; these read ATVMFC and RL. Position 215–217 (215–217) interacts with substrate; it reads ASY. The chain crosses the membrane as a helical span at residues 227-247; it reads TGMALMFLVMVVAQWVGYVLY.

Belongs to the pyridoxamine 5'-phosphate oxidase family. Requires FMN as cofactor.

The protein resides in the membrane. Its pathway is mycotoxin biosynthesis. Functionally, pyridoxamine 5'-phosphate oxidase family protein; part of the gene cluster that mediates the biosynthesis of the secondary metabolite ustiloxin B, an antimitotic tetrapeptide. First, ustA is processed by the subtilisin-like endoprotease Kex2 that is outside the ustiloxin B gene cluster, at the C-terminal side of Arg-Lys, after transfer to Golgi apparatus through the endoplasmic reticulum (ER). Cleavage by KEX2 generates 16 peptides YAIG-I to YAIG-XVI. To process the precursor peptide further, at least two peptidases are necessary to cleave the N-terminal and C-terminal sides of the Tyr-Ala-Ile-Gly core peptide which serves as backbone for the synthesis of ustiloxin B, through cyclization and modification of the tyrosine with a non-protein coding amino acid, norvaline. One of the two peptidases must be the serine peptidase ustP; and the other pepdidase is probably ustH. Macrocyclization of the core peptide derived from ustA requires the tyrosinase ustQ, as well as the homologous oxidases ustYa and ustYb, and leads to the production of the first cyclization product N-desmethylustiloxin F. For the formation of N-desmethylustiloxin F, three oxidation steps are required, hydroxylation at the benzylic position, hydroxylation at either the aromatic ring of Tyr or beta-position of Ile, and oxidative cyclization. UstQ may catalyze the oxidation of a phenol moiety, whereas the ustYa and ustYb are most likely responsible for the remaining two-step oxidations. N-desmethylustiloxin F is then methylated by ustM to yield ustiloxin F which in turn substrate of the cytochrome P450 monooxygenase ustC which catalyzes the formation of S-deoxyustiloxin H. The flavoprotein monooxygenases ustF1 and ustF2 then participate in the modification of the side chain of S-deoxyustiloxin H, leading to the synthesis of an oxime intermediate, via ustiloxin H. Finally, carboxylative dehydration performed by the cysteine desulfurase-like protein ustD yields ustiloxin B. This Aspergillus flavus (strain ATCC 200026 / FGSC A1120 / IAM 13836 / NRRL 3357 / JCM 12722 / SRRC 167) protein is Pyridoxamine 5'-phosphate oxidase family protein ustO.